A 521-amino-acid chain; its full sequence is Bifunctional purine biosynthesis protein PurH (521 aa).

One can recognise an MGS-like domain in the interval M1 to V145.

It belongs to the PurH family.

It catalyses the reaction (6R)-10-formyltetrahydrofolate + 5-amino-1-(5-phospho-beta-D-ribosyl)imidazole-4-carboxamide = 5-formamido-1-(5-phospho-D-ribosyl)imidazole-4-carboxamide + (6S)-5,6,7,8-tetrahydrofolate. The enzyme catalyses IMP + H2O = 5-formamido-1-(5-phospho-D-ribosyl)imidazole-4-carboxamide. The protein operates within purine metabolism; IMP biosynthesis via de novo pathway; 5-formamido-1-(5-phospho-D-ribosyl)imidazole-4-carboxamide from 5-amino-1-(5-phospho-D-ribosyl)imidazole-4-carboxamide (10-formyl THF route): step 1/1. It functions in the pathway purine metabolism; IMP biosynthesis via de novo pathway; IMP from 5-formamido-1-(5-phospho-D-ribosyl)imidazole-4-carboxamide: step 1/1. In Burkholderia pseudomallei (strain 1106a), this protein is Bifunctional purine biosynthesis protein PurH.